We begin with the raw amino-acid sequence, 502 residues long: Cytochrome P450 CYP94D109 (502 aa).

The chain crosses the membrane as a helical span at residues 3–23 (SLSLIFISFITLIVFLVVSAS). Position 437 (cysteine 437) interacts with heme.

It belongs to the cytochrome P450 family. In terms of tissue distribution, mainly expressed in leaves and, at low levels, in roots, fruits and stems.

It is found in the membrane. It functions in the pathway steroid metabolism; cholesterol metabolism. In terms of biological role, involved in the biosynthesis of spiroketal steroid and saponin natural products from cholesterol such as diosgenin and analogs (e.g. furostanol and spirostanol), plant defense compounds used as main precursors for the industrial production of steroid hormones. During the 5,6-spiroketalization of cholesterol, may catalyze the 27-monohydroxylation of furostanol-type steroid to an intermediate product that undergoes a stereospecific formation of the terminal heterocycle to yield diosgenin. The chain is Cytochrome P450 CYP94D109 from Paris polyphylla (Daiswa polyphylla).